The chain runs to 148 residues: Large ribosomal subunit protein uL15 (148 aa).

The disordered stretch occupies residues 12 to 52 (ERKNRKRVGRGGGSGWGGTSGKGHKGQNARSGGGVPAWFEG). Residues 21 to 32 (RGGGSGWGGTSG) show a composition bias toward gly residues.

Belongs to the universal ribosomal protein uL15 family. As to quaternary structure, part of the 50S ribosomal subunit.

Binds to the 23S rRNA. The polypeptide is Large ribosomal subunit protein uL15 (Maridesulfovibrio salexigens (strain ATCC 14822 / DSM 2638 / NCIMB 8403 / VKM B-1763) (Desulfovibrio salexigens)).